A 502-amino-acid polypeptide reads, in one-letter code: Adenylate cyclase (502 aa).

The Cytoplasmic segment spans residues 1 to 25; that stretch reads MGDFCRRVDCKAMKFFALRSSIRTQ. A helical membrane pass occupies residues 26–46; the sequence is IMASTTLLILALIGAIVTVWA. Over 47 to 203 the chain is Lumenal, thylakoid; it reads KSESTLYHQE…RKVNLAVTNA (157 aa). A helical transmembrane segment spans residues 204–226; the sequence is VNQALVVGFAGLNIGWICAYFLA. Residues 227 to 280 enclose the HAMP domain; that stretch reads QHLSDPVRRLQISVAKIAGGDLQHRADIHSRADEIGALATSVNEMSAALQISFN. Residues 227–502 lie on the Cytoplasmic side of the membrane; sequence QHLSDPVRRL…EAISIYEVKA (276 aa). In terms of domain architecture, Guanylate cyclase spans 320-451; that stretch reads TILFCDIRGY…DAVNVASRIE (132 aa). Mg(2+) contacts are provided by D325 and D369.

It belongs to the adenylyl cyclase class-3 family. Requires Mg(2+) as cofactor.

Its subcellular location is the cellular thylakoid membrane. It catalyses the reaction ATP = 3',5'-cyclic AMP + diphosphate. Functionally, may function as a membrane-localized receptor protein. This is Adenylate cyclase (cya) from Anabaena cylindrica.